We begin with the raw amino-acid sequence, 315 residues long: DDRGK domain-containing protein 1 (315 aa).

A helical transmembrane segment spans residues 1–28 (MVGPWVYLVAAVLLIGLILFLTRSRGRA). The tract at residues 1–115 (MVGPWVYLVA…IEKPAEVHPT (115 aa)) is mediates interaction with CDK5RAP3. Residues 29–315 (AAADGEPLHN…GQDLPAQASA (287 aa)) lie on the Cytoplasmic side of the membrane. Positions 30–184 (AADGEPLHNE…ERKAQEEQAR (155 aa)) are disordered. Basic and acidic residues predominate over residues 34 to 43 (EPLHNEEERA). Phosphoserine is present on Ser73. A mediates interaction with TRIP4 region spans residues 119-217 (GAKKLRKLEE…MTEEQSHSFL (99 aa)). The segment covering 125 to 184 (KLEEKQARKAQREAEEAEREERKRLESQREAEWKKEEERLRLKEEQKEEEERKAQEEQAR) has biased composition (basic and acidic residues). A UFM1-interacting motif (UFIM) motif is present at residues 196–210 (AFVVEEEGVSETMTE). The mediates interaction with UFL1 stretch occupies residues 217–315 (LTEFINYIKK…GQDLPAQASA (99 aa)). The PCI domain occupies 230 to 274 (VLLEDLAFQMGLRTQDAINRIQDLLTEGTLTGVIDDRGKFIYITP). Lys268 is covalently cross-linked (Glycyl lysine isopeptide (Lys-Gly) (interchain with G-Cter in UFM1)).

The protein belongs to the DDRGK1 family. As to quaternary structure, component of the UFM1 ribosome E3 ligase (UREL) complex, composed of UFL1, DDRGK1 and CDK5RAP3. Interacts with (unphosphorylated) ERN1/IRE1-alpha; interaction is dependent on UFM1 and takes place in response to endoplasmic reticulum stress, regulating ERN1/IRE1-alpha stability. Interacts with NFKBIA. Interacts with SOX9. Ufmylated; conjugated to ubiquitin-like protein UFM1, probably at Lys-268 by UFL1. The relevance of ufmylation is however unclear: as DDRGK1 acts as a substrate adapter for ufmylation, it is uncertain whether ufmylation is a collateral effect of the ufmylation process or whether it is required to regulate its activity. In terms of processing, ubiquitinated. Ubiquitination probably triggers proteasomal degradation and is negatively regulated by UFL1, the enzyme involved in the ufmylation of DDRGK1. In terms of tissue distribution, ubiquitously expressed. Higher expression in pancreatic islets, pancreatic acini and testis (at protein level). Highly expressed in the intestinal exocrine cells.

Its subcellular location is the endoplasmic reticulum membrane. In terms of biological role, component of the UFM1 ribosome E3 ligase (UREL) complex, a multiprotein complex that catalyzes ufmylation of endoplasmic reticulum-docked proteins. The UREL complex plays a key role in ribosome recycling by mediating mono-ufmylation of the RPL26/uL24 subunit of the 60S ribosome following ribosome dissociation: ufmylation weakens the junction between post-termination 60S subunits and SEC61 translocons, promoting release and recycling of the large ribosomal subunit from the endoplasmic reticulum membrane. Ufmylation of RPL26/uL24 and subsequent 60S ribosome recycling either take place after normal termination of translation or after ribosome stalling during cotranslational translocation at the endoplasmic reticulum. Within the UREL complex, DDRGK1 tethers the complex to the endoplasmic reticulum membrane to restrict its activity to endoplasmic reticulum-docked ribosomes and acts as an ufmylation 'reader': following RPL26/uL24 ufmylation, DDRGK1 specifically binds to ufmylated RPL26/uL24 via its UFIM motif, resulting in stable association between the 60S ribosome and the UREL complex, followed by dissociation of the 60S ribosome subunit from the endoplasmic reticulum membrane. The UREL complex is also involved in reticulophagy in response to endoplasmic reticulum stress by promoting ufmylation of proteins such as CYB5R3 and RPN1, thereby promoting lysosomal degradation of ufmylated proteins. Ufmylation-dependent reticulophagy inhibits the unfolded protein response (UPR) by regulating ERN1/IRE1-alpha stability. Acts as a regulator of immunity by promoting differentiation of B-cells into plasma cells: acts by promoting expansion of the endoplasmic reticulum and regulating the unfolded protein response (UPR). May also be required for TRIP4 ufmylation. May play a role in NF-kappa-B-mediated transcription through regulation of the phosphorylation and the degradation of NFKBIA, the inhibitor of NF-kappa-B. Plays a role in cartilage development through SOX9, inhibiting the ubiquitin-mediated proteasomal degradation of this transcriptional regulator. Required for stabilization and ufmylation of ATG9A. This is DDRGK domain-containing protein 1 from Mus musculus (Mouse).